Reading from the N-terminus, the 318-residue chain is Malate dehydrogenase (318 aa).

NAD(+)-binding positions include 10 to 15 and Asp34; that span reads GGGQIG. Arg83 and Arg89 together coordinate substrate. Residues Asn96 and 119 to 121 each bind NAD(+); that span reads ISN. Positions 121 and 152 each coordinate substrate. The active-site Proton acceptor is His176.

Belongs to the LDH/MDH superfamily. MDH type 3 family.

It catalyses the reaction (S)-malate + NAD(+) = oxaloacetate + NADH + H(+). In terms of biological role, catalyzes the reversible oxidation of malate to oxaloacetate. This Geotalea daltonii (strain DSM 22248 / JCM 15807 / FRC-32) (Geobacter daltonii) protein is Malate dehydrogenase.